The chain runs to 433 residues: Adenylosuccinate synthetase (433 aa).

GTP is bound by residues 11–17 and 39–41; these read GDEGKGK and GHT. Aspartate 12 functions as the Proton acceptor in the catalytic mechanism. The Mg(2+) site is built by aspartate 12 and glycine 39. IMP contacts are provided by residues 12-15, 37-40, threonine 134, arginine 148, asparagine 230, threonine 245, and arginine 309; these read DEGK and NAGH. Histidine 40 (proton donor) is an active-site residue. Residue 305–311 participates in substrate binding; it reads VTTGRKR. Residues arginine 311, 337 to 339, and 419 to 421 each bind GTP; these read KLD and GTG.

Belongs to the adenylosuccinate synthetase family. In terms of assembly, homodimer. It depends on Mg(2+) as a cofactor.

It is found in the cytoplasm. It catalyses the reaction IMP + L-aspartate + GTP = N(6)-(1,2-dicarboxyethyl)-AMP + GDP + phosphate + 2 H(+). Its pathway is purine metabolism; AMP biosynthesis via de novo pathway; AMP from IMP: step 1/2. Plays an important role in the de novo pathway and in the salvage pathway of purine nucleotide biosynthesis. Catalyzes the first committed step in the biosynthesis of AMP from IMP. The protein is Adenylosuccinate synthetase of Saccharomyces cerevisiae (strain Lalvin EC1118 / Prise de mousse) (Baker's yeast).